The chain runs to 533 residues: 2-isopropylmalate synthase (533 aa).

The region spanning Ile-8–Ala-269 is the Pyruvate carboxyltransferase domain. Residues Asp-17, His-208, His-210, and Asn-244 each coordinate Mn(2+). Residues Arg-408–Leu-533 form a regulatory domain region.

It belongs to the alpha-IPM synthase/homocitrate synthase family. LeuA type 1 subfamily. Homodimer. The cofactor is Mn(2+).

Its subcellular location is the cytoplasm. It carries out the reaction 3-methyl-2-oxobutanoate + acetyl-CoA + H2O = (2S)-2-isopropylmalate + CoA + H(+). It functions in the pathway amino-acid biosynthesis; L-leucine biosynthesis; L-leucine from 3-methyl-2-oxobutanoate: step 1/4. Its function is as follows. Catalyzes the condensation of the acetyl group of acetyl-CoA with 3-methyl-2-oxobutanoate (2-ketoisovalerate) to form 3-carboxy-3-hydroxy-4-methylpentanoate (2-isopropylmalate). The polypeptide is 2-isopropylmalate synthase (Synechocystis sp. (strain ATCC 27184 / PCC 6803 / Kazusa)).